We begin with the raw amino-acid sequence, 162 residues long: 2-C-methyl-D-erythritol 2,4-cyclodiphosphate synthase (162 aa).

Residues aspartate 8 and histidine 10 each contribute to the a divalent metal cation site. 4-CDP-2-C-methyl-D-erythritol 2-phosphate contacts are provided by residues aspartate 8–histidine 10 and histidine 36–serine 37. Histidine 44 serves as a coordination point for a divalent metal cation. Residues aspartate 58 to glycine 60, phenylalanine 63 to aspartate 67, alanine 102 to alanine 108, threonine 134 to glutamate 137, phenylalanine 141, and arginine 144 each bind 4-CDP-2-C-methyl-D-erythritol 2-phosphate.

Belongs to the IspF family. In terms of assembly, homotrimer. A divalent metal cation serves as cofactor.

The catalysed reaction is 4-CDP-2-C-methyl-D-erythritol 2-phosphate = 2-C-methyl-D-erythritol 2,4-cyclic diphosphate + CMP. Its pathway is isoprenoid biosynthesis; isopentenyl diphosphate biosynthesis via DXP pathway; isopentenyl diphosphate from 1-deoxy-D-xylulose 5-phosphate: step 4/6. Its function is as follows. Involved in the biosynthesis of isopentenyl diphosphate (IPP) and dimethylallyl diphosphate (DMAPP), two major building blocks of isoprenoid compounds. Catalyzes the conversion of 4-diphosphocytidyl-2-C-methyl-D-erythritol 2-phosphate (CDP-ME2P) to 2-C-methyl-D-erythritol 2,4-cyclodiphosphate (ME-CPP) with a corresponding release of cytidine 5-monophosphate (CMP). The chain is 2-C-methyl-D-erythritol 2,4-cyclodiphosphate synthase from Yersinia pseudotuberculosis serotype O:1b (strain IP 31758).